The sequence spans 247 residues: Myelin-oligodendrocyte glycoprotein (247 aa).

An N-terminal signal peptide occupies residues 1-29 (MASLSRPSLPSCLCSFLLLLLLQVSSSYA). Residues 30–154 (GQFRVIGPRH…EDPFYWVSPG (125 aa)) lie on the Extracellular side of the membrane. In terms of domain architecture, Ig-like V-type spans 32 to 145 (FRVIGPRHPI…EEAAMELKVE (114 aa)). A disulfide bond links cysteine 53 and cysteine 127. Asparagine 60 is a glycosylation site (N-linked (GlcNAc...) asparagine). Residues 155 to 175 (VLVLLAVLPVLLLQITVGLIF) traverse the membrane as a helical segment. Residues 176-210 (LCLQYRLRGKLRAEIENLHRTFDPHFLRVPCWKIT) are Cytoplasmic-facing. Residues 211-231 (LFVIVPVLGPLVALIICYNWL) traverse the membrane as a helical segment. The Extracellular portion of the chain corresponds to 232-247 (HRRLAGQFLEELRNPF).

The protein belongs to the immunoglobulin superfamily. BTN/MOG family. In terms of assembly, homodimer. May form heterodimers between the different isoforms. (Microbial infection) Interacts with rubella virus E2 glycoprotein. In terms of tissue distribution, found exclusively in the CNS, where it is localized on the surface of myelin and oligodendrocyte cytoplasmic membranes.

The protein resides in the cell membrane. Its function is as follows. Mediates homophilic cell-cell adhesion. Minor component of the myelin sheath. May be involved in completion and/or maintenance of the myelin sheath and in cell-cell communication. (Microbial infection) Acts as a receptor for rubella virus. The sequence is that of Myelin-oligodendrocyte glycoprotein (MOG) from Homo sapiens (Human).